The following is a 109-amino-acid chain: uncharacterized protein (109 aa).

The next 3 membrane-spanning stretches (helical) occupy residues 7–27 (IITI…PFFV), 37–57 (YIRY…VVYC), and 63–83 (ILTG…LGLH).

This sequence belongs to the AzlD/HI_1737/HP1330 family.

The protein resides in the cell membrane. This is an uncharacterized protein from Haemophilus influenzae (strain ATCC 51907 / DSM 11121 / KW20 / Rd).